Reading from the N-terminus, the 426-residue chain is mRNA cap guanine-N(7) methyltransferase (426 aa).

One can recognise an mRNA cap 0 methyltransferase domain in the interval 138–421 (SPIIKLRNFN…FYTTFAFRKV (284 aa)). 147 to 148 (NN) serves as a coordination point for mRNA. Residues Lys-151, Ala-169, Asp-191, Asp-220, Gln-246, and Tyr-251 each coordinate S-adenosyl-L-methionine.

The protein belongs to the class I-like SAM-binding methyltransferase superfamily. mRNA cap 0 methyltransferase family.

It is found in the nucleus. The catalysed reaction is a 5'-end (5'-triphosphoguanosine)-ribonucleoside in mRNA + S-adenosyl-L-methionine = a 5'-end (N(7)-methyl 5'-triphosphoguanosine)-ribonucleoside in mRNA + S-adenosyl-L-homocysteine. Its function is as follows. Responsible for methylating the 5'-cap structure of mRNAs. In Kluyveromyces lactis (strain ATCC 8585 / CBS 2359 / DSM 70799 / NBRC 1267 / NRRL Y-1140 / WM37) (Yeast), this protein is mRNA cap guanine-N(7) methyltransferase (ABD1).